The primary structure comprises 293 residues: Homoserine kinase (293 aa).

ATP is bound at residue 80-90; that stretch reads RPASGLGSSAA.

Belongs to the GHMP kinase family. Homoserine kinase subfamily.

It localises to the cytoplasm. It carries out the reaction L-homoserine + ATP = O-phospho-L-homoserine + ADP + H(+). It participates in amino-acid biosynthesis; L-threonine biosynthesis; L-threonine from L-aspartate: step 4/5. Catalyzes the ATP-dependent phosphorylation of L-homoserine to L-homoserine phosphate. The chain is Homoserine kinase from Halorubrum lacusprofundi (strain ATCC 49239 / DSM 5036 / JCM 8891 / ACAM 34).